The sequence spans 208 residues: Small ribosomal subunit protein uS4 (208 aa).

An S4 RNA-binding domain is found at R95–N157.

This sequence belongs to the universal ribosomal protein uS4 family. As to quaternary structure, part of the 30S ribosomal subunit. Contacts protein S5. The interaction surface between S4 and S5 is involved in control of translational fidelity.

Functionally, one of the primary rRNA binding proteins, it binds directly to 16S rRNA where it nucleates assembly of the body of the 30S subunit. In terms of biological role, with S5 and S12 plays an important role in translational accuracy. The chain is Small ribosomal subunit protein uS4 from Borrelia duttonii (strain Ly).